The following is a 495-amino-acid chain: DNA double-strand break repair helicase HerA (495 aa).

ATP is bound by residues R141, 150-155 (GSGKSN), and 458-459 (KI).

The protein belongs to the HerA family. Forms a hexamer or a heptamer. Interacts with Mre11.

The catalysed reaction is Couples ATP hydrolysis with the unwinding of duplex DNA at the replication fork by translocating in the 5'-3' direction. This creates two antiparallel DNA single strands (ssDNA). The leading ssDNA polymer is the template for DNA polymerase III holoenzyme which synthesizes a continuous strand.. It catalyses the reaction ATP + H2O = ADP + phosphate + H(+). It carries out the reaction Couples ATP hydrolysis with the unwinding of duplex DNA by translocating in the 3'-5' direction.. Its activity is regulated as follows. ATPase activity is slightly stimulated by either circular single- or double-stranded (ds)DNA with a weak preference for dsDNA. Helicase activity is stimulated by Mre11. In terms of biological role, involved in DNA double-strand break (DSB) repair. Probably acts with NurA to stimulate resection of the 5' strand and produce the long 3' single-strand that is required for RadA loading. Has DNA-dependent ATPase activity and bidirectional DNA helicase activity. Loads on either a 3' or a 5' DNA tail for subsequent DNA unwinding. Can also unwind blunt-ended dsDNA, Holliday junction and splayed-arm DNA. In Sulfurisphaera tokodaii (strain DSM 16993 / JCM 10545 / NBRC 100140 / 7) (Sulfolobus tokodaii), this protein is DNA double-strand break repair helicase HerA.